A 201-amino-acid polypeptide reads, in one-letter code: FMN-dependent NADH:quinone oxidoreductase (201 aa).

Residues Ser10, 16-18 (SQS), 96-99 (MYNF), and 140-143 (SRGG) contribute to the FMN site.

It belongs to the azoreductase type 1 family. As to quaternary structure, homodimer. It depends on FMN as a cofactor.

The catalysed reaction is 2 a quinone + NADH + H(+) = 2 a 1,4-benzosemiquinone + NAD(+). The enzyme catalyses N,N-dimethyl-1,4-phenylenediamine + anthranilate + 2 NAD(+) = 2-(4-dimethylaminophenyl)diazenylbenzoate + 2 NADH + 2 H(+). Functionally, quinone reductase that provides resistance to thiol-specific stress caused by electrophilic quinones. Also exhibits azoreductase activity. Catalyzes the reductive cleavage of the azo bond in aromatic azo compounds to the corresponding amines. The protein is FMN-dependent NADH:quinone oxidoreductase of Salmonella paratyphi A (strain ATCC 9150 / SARB42).